Consider the following 118-residue polypeptide: Large ribosomal subunit protein uL24 (118 aa).

This sequence belongs to the universal ribosomal protein uL24 family. As to quaternary structure, part of the 50S ribosomal subunit.

Its function is as follows. One of two assembly initiator proteins, it binds directly to the 5'-end of the 23S rRNA, where it nucleates assembly of the 50S subunit. In terms of biological role, one of the proteins that surrounds the polypeptide exit tunnel on the outside of the subunit. This Prochlorococcus marinus (strain MIT 9301) protein is Large ribosomal subunit protein uL24.